Consider the following 262-residue polypeptide: G patch domain-containing protein 11 (262 aa).

Composition is skewed to basic and acidic residues over residues 39-61 (LHKE…ESRE), 114-127 (EEVK…ELQN), and 136-165 (QHLE…DLRK). Disordered stretches follow at residues 39-71 (LHKE…IGSQ) and 88-169 (GLGK…SQRA). Residues 41 to 62 (KEKDIQNRQKSFKEQEKESREA) are a coiled coil. The region spanning 70–116 (SQNKGFALLQKMGYKAGQGLGKEGAGRVEPVPLNIKTDRGGIGMEEV) is the G-patch domain.

Belongs to the GPATCH11 family.

Its subcellular location is the chromosome. It is found in the centromere. It localises to the kinetochore. The chain is G patch domain-containing protein 11 (gpatch11) from Danio rerio (Zebrafish).